The sequence spans 598 residues: Fructan 6-exohydrolase (598 aa).

An N-terminal signal peptide occupies residues 1-30; that stretch reads MAARLPLAACVVAFHLCLLLSSLVRSPSTA. The active site involves aspartate 65. N-linked (GlcNAc...) asparagine glycosylation is found at asparagine 93, asparagine 288, and asparagine 351. An intrachain disulfide couples cysteine 451 to cysteine 497. An N-linked (GlcNAc...) asparagine glycan is attached at asparagine 572.

Belongs to the glycosyl hydrolase 32 family. As to expression, expressed in leaves, stems, roots and inflorescences. Maximum expression is detected in stems, particularly the penultimate internode.

The catalysed reaction is Hydrolysis of terminal, non-reducing (2-&gt;6)-linked beta-D-fructofuranose residues in fructans.. With respect to regulation, not inhibited by sucrose. In terms of biological role, hydrolyzes levan-type beta-(2-&gt;6)-linked fructans to fructose, but not inulin-type beta-(2-&gt;1)-linked fructans. This chain is Fructan 6-exohydrolase, found in Triticum aestivum (Wheat).